The chain runs to 461 residues: Ig heavy chain C region, membrane-bound form (461 aa).

Residues 1 to 99 form a CH1 region; the sequence is ATPSPPTLYG…GESVWIKEIP (99 aa). The tract at residues 100 to 205 is CH2; the sequence is DCKGDKVHPT…TQSRNITGSQ (106 aa). N-linked (GlcNAc...) asparagine glycans are attached at residues Asn164, Asn200, Asn245, Asn275, Asn374, Asn411, Asn415, and Asn437. The segment at 206–308 is CH3; the sequence is VPCSCNDPVI…PLRASIHKEE (103 aa). The CH4 stretch occupies residues 309–418; it reads VKDLREPSVS…IINRTVNKSS (110 aa). Residues 438-458 form a helical membrane-spanning segment; sequence ASTFIILFFLSIFYRAAVTLV.

It is found in the cell membrane. This is Ig heavy chain C region, membrane-bound form from Heterodontus francisci (Horn shark).